A 355-amino-acid chain; its full sequence is MGCTVSAEDKAAAERSKMIDKNLREDGEKAAREVKLLLLGAGESGKSTIVKQMKIIHEDGYSEEECRQYRAVVYSNTIQSIMAIVKAMGNLQIDFADPSRADDARQLFALSCTAEEQGVLPDDLSGVIRRLWADHGVQACFGRSREYQLNDSAAYYLNDLERIAQSDYIPTQQDVLRTRVKTTGIVETHFTFKDLHFKMFDVGGQRSERKKWIHCFEGVTAIIFCVALSAYDLVLAEDEEMNRMHESMKLFDSICNNKWFTDTSIILFLNKKDLFEEKITHSPLTICFPEYTGANKYDEAASYIQSKFEDLNKRKDTKEIYTHFTCATDTKNVQFVFDAVTDVIIKNNLKDCGLF.

The N-myristoyl glycine moiety is linked to residue glycine 2. Residue cysteine 3 is the site of S-palmitoyl cysteine attachment. Positions arginine 32–phenylalanine 355 constitute a G-alpha domain. Positions lysine 35–threonine 48 are G1 motif. GTP contacts are provided by residues glycine 40–serine 47, leucine 176–threonine 182, aspartate 201–glutamine 205, asparagine 270–aspartate 273, and alanine 327. Position 47 (serine 47) interacts with Mg(2+). A G2 motif region spans residues aspartate 174–threonine 182. Position 179 is an ADP-ribosylarginine; by cholera toxin (arginine 179). Threonine 182 provides a ligand contact to Mg(2+). The tract at residues phenylalanine 197 to arginine 206 is G3 motif. Glutamine 205 is subject to Deamidated glutamine; by Photorhabdus PAU_02230. The interval isoleucine 266–aspartate 273 is G4 motif. The segment at threonine 325–threonine 330 is G5 motif. Cysteine 352 bears the ADP-ribosylcysteine; by pertussis toxin mark.

This sequence belongs to the G-alpha family. G(i/o/t/z) subfamily. G proteins are composed of 3 units; alpha, beta and gamma. The alpha chain contains the guanine nucleotide binding site. In this context, interacts with GNB2. Interacts with GPSM1. Interacts with RGS12 and RGS14. Interacts with UNC5B. Interacts (inactive GDP-bound form) with NUCB1 (via GBA motif); the interaction leads to activation of GNAI3. Interacts (inactive GDP-bound form) with CCDC88C/DAPLE (via GBA motif). Interacts (inactive GDP-bound form) with CCDC8A/GIV (via GBA motif). Interacts with CXCR1 and CXCR2. In terms of processing, (Microbial infection) Deamidated at Gln-205 by Photorhabdus asymbiotica toxin PAU_02230, blocking GTP hydrolysis of heterotrimeric GNAQ or GNA11 and G-alphai (GNAI1, GNAI2 or GNAI3) proteins, thereby activating RhoA.

Its subcellular location is the cytoplasm. The protein localises to the cytoskeleton. It localises to the microtubule organizing center. It is found in the centrosome. The protein resides in the cell membrane. Its subcellular location is the membrane. Functionally, guanine nucleotide-binding proteins (G proteins) are involved as modulators or transducers in various transmembrane signaling systems. The G(i) proteins are involved in hormonal regulation of adenylate cyclase: they inhibit the cyclase in response to beta-adrenergic stimuli. May play a role in cell division. Its function is as follows. Regulates the cell surface density of dopamine receptors DRD2 by sequestrating them as an intracellular pool. This chain is Guanine nucleotide-binding protein G(i) subunit alpha-2 (GNAI2), found in Homo sapiens (Human).